The chain runs to 270 residues: MAVITKIEVQKRSKERFNIYIDKGQGEEYGFSVNEVILIKHGLQKGLEIDEIALGNILYNEEVQKAYLQAISYLSYQMRTKLEIEDFLRKKEVGQAIISEVVSKLLHDRYINDKEYAILYTRTQSNVNRKGPTVIKRELLNKGVQDLIITHSLQEYPKEKQIENALILIEKKKKSYQKHSFLQMKLKLDEMLVRKGYSRDVIQICLEELKDEKDDEKQREALHYHGNKYYEKYKKYDGWTFENKMKQALYRKGFSIDEIEIFLQMKREEG.

This sequence belongs to the RecX family.

It is found in the cytoplasm. Modulates RecA activity. This Bacillus cereus (strain AH187) protein is Regulatory protein RecX.